A 141-amino-acid polypeptide reads, in one-letter code: Ribosome maturation factor RimP (141 aa).

This sequence belongs to the RimP family.

Its subcellular location is the cytoplasm. Functionally, required for maturation of 30S ribosomal subunits. The polypeptide is Ribosome maturation factor RimP (Laribacter hongkongensis (strain HLHK9)).